A 151-amino-acid chain; its full sequence is Endoribonuclease YbeY (151 aa).

Positions 108, 112, and 118 each coordinate Zn(2+).

Belongs to the endoribonuclease YbeY family. Zn(2+) is required as a cofactor.

The protein localises to the cytoplasm. Single strand-specific metallo-endoribonuclease involved in late-stage 70S ribosome quality control and in maturation of the 3' terminus of the 16S rRNA. The protein is Endoribonuclease YbeY of Porphyromonas gingivalis (strain ATCC 33277 / DSM 20709 / CIP 103683 / JCM 12257 / NCTC 11834 / 2561).